The sequence spans 252 residues: Aspartate/glutamate leucyltransferase (252 aa).

It belongs to the R-transferase family. Bpt subfamily.

The protein localises to the cytoplasm. The catalysed reaction is N-terminal L-glutamyl-[protein] + L-leucyl-tRNA(Leu) = N-terminal L-leucyl-L-glutamyl-[protein] + tRNA(Leu) + H(+). The enzyme catalyses N-terminal L-aspartyl-[protein] + L-leucyl-tRNA(Leu) = N-terminal L-leucyl-L-aspartyl-[protein] + tRNA(Leu) + H(+). Functionally, functions in the N-end rule pathway of protein degradation where it conjugates Leu from its aminoacyl-tRNA to the N-termini of proteins containing an N-terminal aspartate or glutamate. The protein is Aspartate/glutamate leucyltransferase of Hyphomonas neptunium (strain ATCC 15444).